Consider the following 409-residue polypeptide: Ubiquitin-associated domain-containing protein 1 (409 aa).

An N-acetylmethionine modification is found at methionine 1. Residues 14 to 98 (LRLHICAADG…LLLIKKRAPS (85 aa)) form the Ubiquitin-like domain. The UBA 1 domain occupies 187–231 (DEDERVDETALRQLTEMGFPESRASKALRLNHMSVPQAMEWLIEH). The interval 235 to 273 (PAIDTPLPGHAAQAEASAAAATSSSSSEAAVGTSVEDEE) is disordered. Over residues 245-264 (AAQAEASAAAATSSSSSEAA) the composition is skewed to low complexity. Positions 292–332 (RADARAVISLMEMGFDEKEVIDALRVNNNQQNAACEWLLGD) constitute a UBA 2 domain. An STI1 domain is found at 357–396 (NPVVQLGLTNPKTLLAFEDMLENPLNSTQWMNDPETGPVM).

In terms of assembly, component of the KPC complex composed of RNF123/KPC1 and UBAC1/KPC2. Interacts (via ubiquitin-like domain) with RNF123. Interacts (via ubiquitin-like and UBA domains) with the proteasome via its N-terminal domain.

The protein localises to the cytoplasm. It functions in the pathway protein modification; protein ubiquitination. Non-catalytic component of the KPC complex, a E3 ubiquitin-protein ligase complex that mediates polyubiquitination of target proteins, such as CDKN1B and NFKB1. The KPC complex catalyzes polyubiquitination and proteasome-mediated degradation of CDKN1B during G1 phase of the cell cycle. The KPC complex also acts as a key regulator of the NF-kappa-B signaling by promoting maturation of the NFKB1 component of NF-kappa-B by catalyzing ubiquitination of the NFKB1 p105 precursor. Within the KPC complex, UBAC1 acts as an adapter that promotes the transfer of target proteins that have been polyubiquitinated by RNF123/KPC1 to the 26S proteasome. The protein is Ubiquitin-associated domain-containing protein 1 (Ubac1) of Rattus norvegicus (Rat).